An 802-amino-acid chain; its full sequence is MYRSTKGASKARRDQINAEIRNLKELLPLAEADKVRLSYLHIMSLACIYTRKGVFFAGGTPLAGPTGLLSAQELEDIVAALPGFLLVFTAEGKLLYLSESVSEHLGHSMVDLVAQGDSIYDIIDPADHLTVRQQLTMPSALDADRLFRCRFNTSKSLRRQSAGNKLVLIRGRFHAHPPGAYWAGNPVFTAFCAPLEPRPRPGPGPGPGPGPASLFLAMFQSRHAKDLALLDISESVLIYLGFERSELLCKSWYGLLHPEDLAHASSQHYRLLAENGDIQAEMVVRLQAKHGGWTWIYCMLYSDGPEGPITANNYPISDTEAWSLRQQLNSENTQAAYVLGTPAVLPSFSENVFSQEHCSNPLFTPALGTPRSASFPRAPELGVISTSEELAQPSKELDFSYLPFPARPEPSLQADLSKDLVCTPPYTPHQPGGCAFLFSLHEPFQTHLPPPSSSLQEQLTPSTVTFSEQLTPSSATFPDPLTSSLQGQLTESSARSFEEQLTPCTSTFPDQLLPSTATFPEPLGSPTHEQLTPPSTAFQAHLNSPSQTFPEQLSPNPTKTYFAQEGCSFLYEKLPPSPSSPGNGDCTLLALAQLRGPLSVDVPLVPEGLLTPEASPVKQSFFHYTEKEQNEIDRLIQQISQLAQGMDRPFSAEAGTGGLEPLGGLEPLNPNLSLSGAGPPVLSLDLKPWKCQELDFLVDPDNLFLEETPVEDIFMDLSTPDPNGEWGSGDPEAEVPGGTLSPCNNLSPEDHSFLEDLATYETAFETGVSTFPYEGFADELHQLQSQVQDSFHEDGSGGEPTF.

The segment at 1-13 (MYRSTKGASKARR) is basic motif; degenerate. The 53-residue stretch at 1–53 (MYRSTKGASKARRDQINAEIRNLKELLPLAEADKVRLSYLHIMSLACIYTRKG) folds into the bHLH domain. Residues 5–38 (TKGASKARRDQINAEIRNLKELLPLAEADKVRLS) adopt a coiled-coil conformation. The tract at residues 14 to 53 (DQINAEIRNLKELLPLAEADKVRLSYLHIMSLACIYTRKG) is helix-loop-helix motif. 2 consecutive PAS domains span residues 70-144 (SAQE…LDAD) and 203-275 (PGPG…LAEN). The 40-residue stretch at 280 to 319 (AEMVVRLQAKHGGWTWIYCMLYSDGPEGPITANNYPISDT) folds into the PAC domain. Composition is skewed to polar residues over residues 472–495 (PSSA…SSAR), 502–518 (TPCT…STAT), and 527–555 (THEQ…QLSP). A disordered region spans residues 472-555 (PSSATFPDPL…SQTFPEQLSP (84 aa)). Residues 624 to 648 (YTEKEQNEIDRLIQQISQLAQGMDR) are a coiled coil.

In terms of assembly, efficient DNA binding requires dimerization with another bHLH protein. Heterodimer; forms a heterodimer with ARNT, ARNT2 or BMAL1. Ubiquitinated, leading to degradation by the proteosome. In terms of tissue distribution, specifically expressed in neurons. Expressed in the lateral nucleus of the amygdala (at protein level).

It localises to the nucleus. Functionally, transcription factor expressed in neurons of the brain that regulates the excitatory-inhibitory balance within neural circuits and is required for contextual memory in the hippocampus. Plays a key role in the structural and functional plasticity of neurons. Acts as an early-response transcription factor in both excitatory and inhibitory neurons, where it induces distinct but overlapping sets of late-response genes in these two types of neurons, allowing the synapses that form on inhibitory and excitatory neurons to be modified by neuronal activity in a manner specific to their function within a circuit, thereby facilitating appropriate circuit responses to sensory experience. In excitatory neurons, activates transcription of BDNF, which in turn controls the number of GABA-releasing synapses that form on excitatory neurons, thereby promoting an increased number of inhibitory synapses on excitatory neurons. In inhibitory neurons, regulates a distinct set of target genes that serve to increase excitatory input onto somatostatin neurons, probably resulting in enhanced feedback inhibition within cortical circuits. The excitatory and inhibitory balance in neurons affects a number of processes, such as short-term and long-term memory, acquisition of experience, fear memory, response to stress and social behavior. Acts as a regulator of dendritic spine development in olfactory bulb granule cells in a sensory-experience-dependent manner by regulating expression of MDM2. Efficient DNA binding requires dimerization with another bHLH protein, such as ARNT, ARNT2 or BMAL1. Can activate the CME (CNS midline enhancer) element. This is Neuronal PAS domain-containing protein 4 from Rattus norvegicus (Rat).